Consider the following 433-residue polypeptide: Poly(A) ribonuclease POP2 (433 aa).

Met-1 is subject to N-acetylmethionine. The disordered stretch occupies residues 78–98; sequence LLTQQQQQQQQQQQPFNIGTP. A compositionally biased stretch (low complexity) spans 81–91; that stretch reads QQQQQQQQQQQ. The residue at position 97 (Thr-97) is a Phosphothreonine; by YAK1. Ser-188, Glu-190, Asp-310, and Gln-394 together coordinate a divalent metal cation.

The protein belongs to the CAF1 family. Subunit of the 1.0 MDa CCR4-NOT core complex that contains CCR4, CAF1, NOT1, NOT2, NOT3, NOT4, NOT5, CAF40 and CAF130. In the complex interacts with NOT1. The core complex probably is part of a less characterized 1.9 MDa CCR4-NOT complex. The cofactor is Mg(2+).

The protein localises to the cytoplasm. It is found in the nucleus. It carries out the reaction Exonucleolytic cleavage of poly(A) to 5'-AMP.. In terms of biological role, acts as a probably catalytic component of the CCR4-NOT core complex, which in the nucleus seems to be a general transcription factor, and in the cytoplasm the major mRNA deadenylase involved in mRNA turnover. In vitro, POP2 has 3'-exoribonuclease activity with a preference for poly(A) RNAs, but also degrades poly(U) and poly(C) RNAs. Is part of a glucose-sensing system involved in growth control in response to glucose availability. In Saccharomyces cerevisiae (strain ATCC 204508 / S288c) (Baker's yeast), this protein is Poly(A) ribonuclease POP2 (POP2).